A 66-amino-acid polypeptide reads, in one-letter code: Toxin BeM14 (66 aa).

The region spanning Arg2 to Arg66 is the LCN-type CS-alpha/beta domain. Disulfide bonds link Cys12/Cys65, Cys16/Cys36, Cys22/Cys46, and Cys26/Cys48.

The protein belongs to the long (4 C-C) scorpion toxin superfamily. Sodium channel inhibitor family. Alpha subfamily. In terms of tissue distribution, expressed by the venom gland.

It is found in the secreted. In terms of biological role, alpha toxins bind voltage-independently at site-3 of sodium channels (Nav) and inhibit the inactivation of the activated channels, thereby blocking neuronal transmission. Has paralytic activity in mice. The sequence is that of Toxin BeM14 from Mesobuthus eupeus (Lesser Asian scorpion).